We begin with the raw amino-acid sequence, 237 residues long: GCN5-related N-acetyltransferase 3, chloroplastic (237 aa).

Residues 1-93 constitute a chloroplast transit peptide; sequence MGLVGCVGKS…RAISRSDVIV (93 aa). One can recognise an N-acetyltransferase domain in the interval 94–237; it reads SVFCKPQHVD…TMMFTKSLEA (144 aa). Acetyl-CoA is bound by residues 171–173, 179–184, 207–209, and Phe214; these read LMV, RMGIGK, and FED.

This sequence belongs to the acetyltransferase family. GNAT subfamily. Oligomer. In terms of processing, autoacetylated. As to expression, expressed in green tissues.

The protein resides in the plastid. Its subcellular location is the chloroplast. The catalysed reaction is an N-terminal L-alpha-aminoacyl-[protein] + acetyl-CoA = N-terminal N(alpha)-acetyl-L-alpha-aminoacyl-[protein] + CoA + H(+). It carries out the reaction L-lysyl-[protein] + acetyl-CoA = N(6)-acetyl-L-lysyl-[protein] + CoA + H(+). In terms of biological role, protein acetyltransferase with dual specificity triggering both N-alpha-acetylation (NTA) and epsilon-lysine acetylation (KA), possibly with a low efficiency or toward specific plastid substrates. This is GCN5-related N-acetyltransferase 3, chloroplastic from Arabidopsis thaliana (Mouse-ear cress).